Consider the following 113-residue polypeptide: U11-theraphotoxin-Hhn1a (113 aa).

A signal peptide spans 1 to 21 (MNTVRVAFLLVFVLAVSLGQA). Residues 22–74 (DKDENRMEMQEKTEQGKSYLDFAENLLLQKLEELEAKLLEEDSEESRNSRQKR) constitute a propeptide that is removed on maturation. A disordered region spans residues 61 to 83 (EEDSEESRNSRQKRCIGEGVPCD). Intrachain disulfides connect C75-C90, C82-C95, and C89-C110.

Belongs to the neurotoxin 14 (magi-1) family. 01 (HNTX-16) subfamily. As to expression, expressed by the venom gland.

The protein localises to the secreted. Its function is as follows. Probable ion channel inhibitor. The sequence is that of U11-theraphotoxin-Hhn1a from Cyriopagopus hainanus (Chinese bird spider).